We begin with the raw amino-acid sequence, 48 residues long: Large ribosomal subunit protein eL40 (48 aa).

This sequence belongs to the eukaryotic ribosomal protein eL40 family.

In Methanoregula boonei (strain DSM 21154 / JCM 14090 / 6A8), this protein is Large ribosomal subunit protein eL40.